Consider the following 235-residue polypeptide: MLRQRFVFDTTALTDSQAWESEGCTTLCEGMSAILHRVAQARLHLGISCYVPYPSVYNEIRDFVRNNNCDIAILGKIDTWLVKKTPDRYRVKIPSKIFYEYVDYMRSRINKGMNVSEEAIWEAVSRCLSISATGEGREQMREEIEREVVGSIIRKFREKYRAALRYGILDSAPDIDVLLLAKDLDAAVVSQDLGIQRWAEQLGLRFMEARAFPQMVREYMSFVPLHTEELEDRMV.

Belongs to the HARP family.

It catalyses the reaction Endonucleolytic cleavage of RNA, removing 5'-extranucleotides from tRNA precursor.. Its function is as follows. RNA-free RNase P that catalyzes the removal of the 5'-leader sequence from pre-tRNA to produce the mature 5'-terminus. The protein is RNA-free ribonuclease P of Methanothrix thermoacetophila (strain DSM 6194 / JCM 14653 / NBRC 101360 / PT) (Methanosaeta thermophila).